The primary structure comprises 155 residues: Keratin-associated protein 4-7 (155 aa).

20 repeat units span residues 5–9 (CCGSV), 24–28 (CCRPS), 29–33 (CCQTT), 34–38 (CCRTT), 44–48 (CCVSS), 49–53 (CCRPQ), 54–58 (CCQSV), 59–63 (CCQPT), 64–68 (CCRPT), 69–73 (CCETT), 74–78 (CCHPR), 79–83 (CCISS), 84–88 (CCRPS), 89–93 (CCMSS), 94–98 (CCKPQ), 99–103 (CCQSV), 104–108 (CCQPT), 109–113 (CCRPS), 114–118 (CCRPC), and 119–123 (CCLRP). Residues 5–123 (CCGSVCSDQG…CCRPCCCLRP (119 aa)) form a 20 X 5 AA repeats of C-C-[GIKRQVHEML]-[SPTRV]-[STVQRCP] region.

This sequence belongs to the KRTAP type 4 family. As to quaternary structure, interacts with hair keratins. Expressed in the hair follicles.

Its function is as follows. In the hair cortex, hair keratin intermediate filaments are embedded in an interfilamentous matrix, consisting of hair keratin-associated proteins (KRTAP), which are essential for the formation of a rigid and resistant hair shaft through their extensive disulfide bond cross-linking with abundant cysteine residues of hair keratins. The matrix proteins include the high-sulfur and high-glycine-tyrosine keratins. The protein is Keratin-associated protein 4-7 (KRTAP4-7) of Homo sapiens (Human).